The chain runs to 342 residues: Large ribosomal subunit protein uL10 (342 aa).

A required for interaction with ribosomal protein L12 dimers region spans residues 212 to 342 (EYIDMLQKAY…ALAGLSALFG (131 aa)). A compositionally biased stretch (polar residues) spans 299–308 (QAQVAVATQP). A disordered region spans residues 299 to 342 (QAQVAVATQPSEEEKKEEEKTEEEEKEEEASEEEALAGLSALFG). Residues 318-333 (KTEEEEKEEEASEEEA) show a composition bias toward acidic residues.

Belongs to the universal ribosomal protein uL10 family. In terms of assembly, part of the 50S ribosomal subunit, binds large rRNA. Forms the ribosomal stalk which helps the ribosome interact with GTP-bound translation factors. Forms a heptameric L10(L12)2(L12)2(L12)2 complex, where L10 forms an elongated spine to which the L12 dimers bind in a sequential fashion.

In terms of biological role, forms the large subunit's ribosomal stalk, playing a central role in the interaction of the ribosome with elongation factors; the stalk complex of P.horikoshii binds to E.coli large subunits and confers on them the ability to interact with eukaryotic elongation factors. Each succesive L12 dimer bound along the P0 spine increases the GTPase activity of elongation factors and increases translation by reconsituted ribosomes, although the first site is the most stimulatory. The sequence is that of Large ribosomal subunit protein uL10 from Pyrococcus horikoshii (strain ATCC 700860 / DSM 12428 / JCM 9974 / NBRC 100139 / OT-3).